The following is a 222-amino-acid chain: Transmembrane protein 114 (222 aa).

A helical membrane pass occupies residues 7–27; that stretch reads ALAGAAALSGALSFVLLAAAI. N-linked (GlcNAc...) asparagine glycosylation is found at asparagine 54 and asparagine 88. 3 helical membrane-spanning segments follow: residues 105–125, 133–153, and 188–208; these read FVIL…TGFL, LLLL…LTGI, and LALG…FLAA.

The protein localises to the cell junction. Its subcellular location is the tight junction. The protein resides in the lateral cell membrane. It localises to the apical cell membrane. The protein is Transmembrane protein 114 of Mus musculus (Mouse).